Here is a 258-residue protein sequence, read N- to C-terminus: Isoprenyl transferase (258 aa).

Asp-24 is an active-site residue. Asp-24 lines the Mg(2+) pocket. Residues 25-28 (GNGR), Trp-29, Arg-37, His-41, and 69-71 (SSE) contribute to the substrate site. The active-site Proton acceptor is Asn-72. Substrate-binding positions include Trp-73, Arg-75, Arg-190, and 196 to 198 (RIS). Glu-209 provides a ligand contact to Mg(2+).

It belongs to the UPP synthase family. As to quaternary structure, homodimer. Requires Mg(2+) as cofactor.

Functionally, catalyzes the condensation of isopentenyl diphosphate (IPP) with allylic pyrophosphates generating different type of terpenoids. This Ralstonia nicotianae (strain ATCC BAA-1114 / GMI1000) (Ralstonia solanacearum) protein is Isoprenyl transferase.